A 562-amino-acid polypeptide reads, in one-letter code: Adenylate kinase isoenzyme 5 (562 aa).

Adenylate kinase regions lie at residues 133–316 (KIIL…MAVD) and 377–559 (KIIF…TAID). 142-147 (GSGKGT) contacts ATP. The segment at 162 to 193 (SVGELLRKKIHSTSSNRKWSLIAKIITTGELA) is NMP 1. Residues Arg-168, 191-193 (ELA), 219-222 (GFPR), and Gln-226 contribute to the AMP site. Positions 256–266 (KRAEQQGRPDD) are LID 1. An ATP-binding site is contributed by Arg-257. The AMP site is built by Arg-263 and Arg-274. 386-391 (GSGKGT) contacts ATP. The tract at residues 406-435 (STDELLQNELSSESGRSKLIRDIMERGELV) is NMP 2. Residues Thr-407, 433–435 (ELV), 462–465 (GYPR), and Gln-469 each bind AMP. The interval 499-509 (QRSRNSPQADD) is LID 2. Residue Arg-500 participates in ATP binding. An AMP-binding site is contributed by Arg-517. Gly-545 lines the ATP pocket.

This sequence belongs to the adenylate kinase family. In terms of assembly, monomer.

The protein localises to the cytoplasm. It carries out the reaction AMP + ATP = 2 ADP. The enzyme catalyses a 2'-deoxyribonucleoside 5'-diphosphate + ATP = a 2'-deoxyribonucleoside 5'-triphosphate + ADP. It catalyses the reaction a ribonucleoside 5'-diphosphate + ATP = a ribonucleoside 5'-triphosphate + ADP. In terms of biological role, nucleoside monophosphate (NMP) kinase that catalyzes the reversible transfer of the terminal phosphate group between nucleoside triphosphates and monophosphates. Active on AMP and dAMP with ATP as a donor. When GTP is used as phosphate donor, the enzyme phosphorylates AMP, CMP, and to a small extent dCMP. Also displays broad nucleoside diphosphate kinase activity. This chain is Adenylate kinase isoenzyme 5 (Ak5), found in Bos taurus (Bovine).